The chain runs to 397 residues: Homoserine O-acetyltransferase (397 aa).

The AB hydrolase-1 domain occupies 58–368; the sequence is NAVLVLHALT…EAKWGHDAFL (311 aa). The active-site Nucleophile is the S164. Residue R233 participates in substrate binding. Residues D331 and H364 contribute to the active site. Substrate is bound at residue D365.

It belongs to the AB hydrolase superfamily. MetX family. As to quaternary structure, homodimer.

Its subcellular location is the cytoplasm. It carries out the reaction L-homoserine + acetyl-CoA = O-acetyl-L-homoserine + CoA. It functions in the pathway amino-acid biosynthesis; L-methionine biosynthesis via de novo pathway; O-acetyl-L-homoserine from L-homoserine: step 1/1. Functionally, transfers an acetyl group from acetyl-CoA to L-homoserine, forming acetyl-L-homoserine. This Solidesulfovibrio magneticus (strain ATCC 700980 / DSM 13731 / RS-1) (Desulfovibrio magneticus) protein is Homoserine O-acetyltransferase.